The sequence spans 321 residues: tRNA pseudouridine synthase B (321 aa).

Residue D47 is the Nucleophile of the active site.

This sequence belongs to the pseudouridine synthase TruB family. Type 1 subfamily.

It carries out the reaction uridine(55) in tRNA = pseudouridine(55) in tRNA. Responsible for synthesis of pseudouridine from uracil-55 in the psi GC loop of transfer RNAs. The chain is tRNA pseudouridine synthase B from Shewanella baltica (strain OS223).